The primary structure comprises 2367 residues: Toxin B (2367 aa).

The four-helical bundle stretch occupies residues serine 2–leucine 91. The region spanning lysine 96–leucine 469 is the GT44 domain. The interval lysine 96–leucine 469 is glucosyltransferase region. Residues isoleucine 101 to isoleucine 103, asparagine 139, serine 269 to arginine 273, and aspartate 286 to aspartate 288 contribute to the UDP-alpha-D-glucose site. Aspartate 286, aspartate 288, and glutamate 516 together coordinate Mg(2+). Residue serine 519 to tryptophan 521 participates in UDP-alpha-D-glucose binding. Positions glycine 545–threonine 800 are autoprocessing region. Zn(2+) is bound by residues glutamate 546 and aspartate 547. The 208-residue stretch at serine 568–serine 775 folds into the Peptidase C80 domain. 1D-myo-inositol hexakisphosphate is bound by residues tyrosine 578, lysine 601, and lysine 648. Histidine 654 contacts Zn(2+). Catalysis depends on histidine 654, which acts as the For protease activity. Cysteine 699 functions as the Nucleophile; for protease activity in the catalytic mechanism. Histidine 758 provides a ligand contact to Zn(2+). Lysine 765, lysine 776, and lysine 793 together coordinate 1D-myo-inositol hexakisphosphate. Residues leucine 801–aspartate 1501 form a translocation region region. Interaction with host frizzled receptors FZD1, FZD2 and FZD7 regions lie at residues leucine 1434–alanine 1439, serine 1487–asparagine 1512, and serine 1598–lysine 1600. Cell wall-binding repeat units follow at residues valine 1833 to asparagine 1852, isoleucine 1854 to glycine 1873, serine 1876 to leucine 1895, phenylalanine 1926 to alanine 1945, alanine 1946 to arginine 1965, phenylalanine 1967 to methionine 1986, glutamine 1987 to methionine 2006, lysine 2007 to methionine 2026, tyrosine 2057 to alanine 2076, valine 2077 to glutamate 2097, serine 2099 to methionine 2118, glutamine 2119 to valine 2138, glutamate 2139 to valine 2158, glutamate 2209 to lysine 2231, tyrosine 2233 to methionine 2252, arginine 2253 to methionine 2272, glutamine 2273 to methionine 2292, tyrosine 2323 to alanine 2342, and alanine 2343 to glutamine 2362. Residues glycine 1835–glutamate 2367 form a receptor-binding (CROPS) region region.

The protein belongs to the clostridial glucosylating toxin (LCGT) family. In terms of assembly, interacts with host FZD1. Interacts with host FZD2; interaction promotes toxin entry into host cell and occupies the binding site for Wnt-adducted palmitoleate in FZD2, leading to prevent Wnt-binding and downstream Wnt signaling. Interacts with host FZD7. Interacts with host CSPG4. Interacts with host NECTIN3/PVRL3. Requires Zn(2+) as cofactor. The cofactor is Mn(2+). It depends on Mg(2+) as a cofactor. In terms of processing, undergoes autocatalytic cleavage to release the N-terminal part (Glucosyltransferase TcdB), which constitutes the active part of the toxin, in the host cytosol. 1D-myo-inositol hexakisphosphate-binding (InsP6) activates the peptidase C80 domain and promotes autoprocessing.

Its subcellular location is the secreted. The protein localises to the host endosome membrane. The protein resides in the host cytoplasm. It is found in the host cytosol. It localises to the host cell membrane. The catalysed reaction is L-threonyl-[protein] + UDP-alpha-D-glucose = 3-O-(alpha-D-glucosyl)-L-threonyl-[protein] + UDP + H(+). Protease activity is activated upon binding to 1D-myo-inositol hexakisphosphate (InsP6), which induces conformational reorganization. In terms of biological role, precursor of a cytotoxin that targets and disrupts the colonic epithelium, inducing the host inflammatory and innate immune responses and resulting in diarrhea and pseudomembranous colitis. TcdB constitutes the main toxin that mediates the pathology of C.difficile infection, an opportunistic pathogen that colonizes the colon when the normal gut microbiome is disrupted. Compared to TcdA, TcdB is more virulent and more important for inducing the host inflammatory and innate immune responses. This form constitutes the precursor of the toxin: it enters into host cells and mediates autoprocessing to release the active toxin (Glucosyltransferase TcdB) into the host cytosol. Targets colonic epithelia by binding to the frizzled receptors FZD1, FZD2 and FZD7, and enters host cells via clathrin-mediated endocytosis. Frizzled receptors constitute the major host receptors in the colonic epithelium, but other receptors, such as CSPG4 or NECTIN3/PVRL3, have been identified. Binding to carbohydrates and sulfated glycosaminoglycans on host cell surface also contribute to entry into cells. Once entered into host cells, acidification in the endosome promotes the membrane insertion of the translocation region and formation of a pore, leading to translocation of the GT44 and peptidase C80 domains across the endosomal membrane. This activates the peptidase C80 domain and autocatalytic processing, releasing the N-terminal part (Glucosyltransferase TcdB), which constitutes the active part of the toxin, in the cytosol. Its function is as follows. Active form of the toxin, which is released into the host cytosol following autoprocessing and inactivates small GTPases. Acts by mediating monoglucosylation of small GTPases of the Rho family (Rac1, RhoA, RhoB, RhoC, RhoG and Cdc42) in host cells at the conserved threonine residue located in the switch I region ('Thr-37/35'), using UDP-alpha-D-glucose as the sugar donor. Monoglucosylation of host small GTPases completely prevents the recognition of the downstream effector, blocking the GTPases in their inactive form, leading to actin cytoskeleton disruption and cell death, resulting in the loss of colonic epithelial barrier function. This Clostridioides difficile (Peptoclostridium difficile) protein is Toxin B.